Reading from the N-terminus, the 332-residue chain is L-lactate dehydrogenase A chain (332 aa).

The residue at position 2 (A2) is an N-acetylalanine. At K5 the chain carries N6-acetyllysine; alternate. The residue at position 5 (K5) is an N6-succinyllysine; alternate. K14 is modified (N6-acetyllysine). Position 29-57 (29-57 (GAVGMACAISILMKDLADELALVDVIEDK)) interacts with NAD(+). At K57 the chain carries N6-acetyllysine; alternate. K57 participates in a covalent cross-link: Glycyl lysine isopeptide (Lys-Gly) (interchain with G-Cter in SUMO2); alternate. An N6-acetyllysine modification is found at K81. R99 lines the NAD(+) pocket. Substrate is bound at residue R106. An N6-acetyllysine; alternate modification is found at K118. Position 118 is an N6-succinyllysine; alternate (K118). N6-acetyllysine is present on K126. Residue N138 participates in NAD(+) binding. Positions 138 and 169 each coordinate substrate. The active-site Proton acceptor is the H193. S213 carries the phosphoserine modification. An N6-acetyllysine mark is found at K224 and K232. Position 239 is a phosphotyrosine (Y239). K243 is subject to N6-acetyllysine. T248 contributes to the substrate binding site. Position 309 is a phosphothreonine (T309). K318 carries the N6-acetyllysine; alternate modification. The residue at position 318 (K318) is an N6-succinyllysine; alternate. T322 is modified (phosphothreonine).

The protein belongs to the LDH/MDH superfamily. LDH family. Homotetramer. Interacts with PTEN upstream reading frame protein MP31. ISGylated.

It localises to the cytoplasm. It catalyses the reaction (S)-lactate + NAD(+) = pyruvate + NADH + H(+). It functions in the pathway fermentation; pyruvate fermentation to lactate; (S)-lactate from pyruvate: step 1/1. Functionally, interconverts simultaneously and stereospecifically pyruvate and lactate with concomitant interconversion of NADH and NAD(+). The polypeptide is L-lactate dehydrogenase A chain (Ldha) (Rattus norvegicus (Rat)).